Reading from the N-terminus, the 374-residue chain is Aminomethyltransferase (374 aa).

This sequence belongs to the GcvT family. In terms of assembly, the glycine cleavage system is composed of four proteins: P, T, L and H.

It carries out the reaction N(6)-[(R)-S(8)-aminomethyldihydrolipoyl]-L-lysyl-[protein] + (6S)-5,6,7,8-tetrahydrofolate = N(6)-[(R)-dihydrolipoyl]-L-lysyl-[protein] + (6R)-5,10-methylene-5,6,7,8-tetrahydrofolate + NH4(+). The glycine cleavage system catalyzes the degradation of glycine. This Prochlorococcus marinus (strain MIT 9313) protein is Aminomethyltransferase.